Consider the following 503-residue polypeptide: CDK5 regulatory subunit-associated protein 3 (503 aa).

3 consecutive short sequence motifs (shuffled ATG8-binding motif) follow at residues 266–269, 288–291, and 306–309; these read IDWG. The required for interaction with UFL1 and mediates interaction with CHEK1 stretch occupies residues 268–503; it reads WGDFGVEAVS…RPVNLMGTSL (236 aa). Residues 352 to 367 form an RPL10a-binding domain (RBD) region; it reads DELMELEIFLSQRAVE. Residue lysine 447 forms a Glycyl lysine isopeptide (Lys-Gly) (interchain with G-Cter in SUMO2) linkage.

It belongs to the CDK5RAP3 family. As to quaternary structure, substrate adapter component of the UFM1 ribosome E3 ligase (UREL) complex, composed of UFL1, DDRGK1 and CDK5RAP3. Interaction with UFL1 anchors CDK5RAP3 in the cytoplasm, preventing its translocation to the nucleus which allows expression of the CCND1 cyclin and progression of cells through the G1/S transition. Interacts with ATG8 family proteins MAP1LC3A, MAP1LC3B, GABARAP, GABARAPL1 and GABARAPL2. Interacts with CDK5R1; competes with CDK5RAP1 and CDK5RAP2. Interacts with RELA. Interacts with CHEK1; may negatively regulate CHEK1 and thereby stimulate entry into mitosis. Interacts with CDKN2A/ARF and MDM2; forms a ternary complex involved in regulation of p53/TP53. Interacts with MAPK14. Interacts with CCNB1. Interacts with TUBG1; may regulate CDK5RAP3 in mitotic G2/M transition checkpoint. Post-translationally, may be phosphorylated by CDK5. Ubiquitinated. Probably triggers proteasomal degradation and is negatively regulated by UFL1. In terms of processing, may be ufmylated. Post-translationally, cleaved by caspases early during apoptosis, the resulting peptides may play a role in rupture of the nuclear envelope. Widely expressed with higher expression in secretory tissues.

The protein localises to the endoplasmic reticulum membrane. It localises to the cytoplasm. It is found in the nucleus. The protein resides in the cytoskeleton. Its subcellular location is the microtubule organizing center. The protein localises to the centrosome. Functionally, substrate adapter of E3 ligase complexes mediating ufmylation, the covalent attachment of the ubiquitin-like modifier UFM1 to substrate proteins, and which is involved in various processes, such as ribosome recycling and reticulophagy (also called ER-phagy). As part of the UREL complex, plays a key role in ribosome recycling by promoting mono-ufmylation of RPL26/uL24 subunit of the 60S ribosome. Ufmylation of RPL26/uL24 occurs on free 60S ribosomes following ribosome dissociation: it weakens the junction between post-termination 60S subunits and SEC61 translocons, promoting release and recycling of the large ribosomal subunit from the endoplasmic reticulum membrane. Ufmylation of RPL26/uL24 and subsequent 60S ribosome recycling either take place after normal termination of translation or after ribosome stalling during cotranslational translocation at the endoplasmic reticulum. Within the UREL complex, CDK5RAP3 acts as a substrate adapter that constrains UFL1 ligase activity to mono-ufmylate RPL26/uL24 at 'Lys-134'. The UREL complex is also involved in reticulophagy in response to endoplasmic reticulum stress by promoting ufmylation of proteins such as CYB5R3, thereby promoting lysosomal degradation of ufmylated proteins. Also acts as a regulator of transcription: negatively regulates NF-kappa-B-mediated gene transcription through the control of RELA phosphorylation. Also regulates mitotic G2/M transition checkpoint and mitotic G2 DNA damage checkpoint. Through its interaction with CDKN2A/ARF and MDM2 may induce MDM2-dependent p53/TP53 ubiquitination, stabilization and activation in the nucleus, thereby promoting G1 cell cycle arrest and inhibition of cell proliferation. May also play a role in the rupture of the nuclear envelope during apoptosis. May regulate MAPK14 activity by regulating its dephosphorylation by PPM1D/WIP1. Required for liver development. This chain is CDK5 regulatory subunit-associated protein 3, found in Mus musculus (Mouse).